The following is a 168-amino-acid chain: Probable prefoldin subunit 5 (168 aa).

The protein belongs to the prefoldin subunit alpha family. Heterohexamer of two PFD-alpha type and four PFD-beta type subunits.

Its function is as follows. Binds specifically to cytosolic chaperonin (c-CPN) and transfers target proteins to it. Binds to nascent polypeptide chain and promotes folding in an environment in which there are many competing pathways for nonnative proteins. The protein is Probable prefoldin subunit 5 of Drosophila melanogaster (Fruit fly).